The following is a 462-amino-acid chain: Kinetochore protein Nuf2-B (462 aa).

A coiled-coil region spans residues 143-462 (SGYKSALENV…AELNRRLSRQ (320 aa)). The interval 236–259 (EQERMKSQIVESPEQRKSKTERMK) is disordered. Positions 248–259 (PEQRKSKTERMK) are enriched in basic and acidic residues.

The protein belongs to the NUF2 family. As to quaternary structure, component of the NDC80 complex, which is composed of ndc80, cdca1, spbc24 and spbc25. The NDC80 complex interacts with mis12 and zwint.

It localises to the nucleus. The protein localises to the chromosome. Its subcellular location is the centromere. It is found in the kinetochore. Its function is as follows. Acts as a component of the essential kinetochore-associated NDC80 complex, which is required for chromosome segregation and spindle checkpoint activity. Required for kinetochore integrity and the organization of stable microtubule binding sites in the outer plate of the kinetochore. The NDC80 complex synergistically enhances the affinity of the SKA1 complex for microtubules and may allow the NDC80 complex to track depolymerizing microtubules. This Xenopus laevis (African clawed frog) protein is Kinetochore protein Nuf2-B (nuf2-b).